The chain runs to 459 residues: Bifunctional protein GlmU (459 aa).

Positions 1–229 (MSNFAIILAA…FDESLGVNDR (229 aa)) are pyrophosphorylase. UDP-N-acetyl-alpha-D-glucosamine-binding positions include 8–11 (LAAG), lysine 22, glutamine 72, 77–78 (GT), 101–102 (GD), glycine 139, glutamate 154, asparagine 169, and asparagine 227. Position 102 (aspartate 102) interacts with Ca(2+). Aspartate 102 is a binding site for Mg(2+). Position 227 (asparagine 227) interacts with Ca(2+). Asparagine 227 contributes to the Mg(2+) binding site. The tract at residues 230-250 (VALATAESVMRRRINHKHMVN) is linker. The interval 251–459 (GVSFVNPEAT…TRLPHHPKNQ (209 aa)) is N-acetyltransferase. The UDP-N-acetyl-alpha-D-glucosamine site is built by arginine 332 and lysine 350. The active-site Proton acceptor is the histidine 362. UDP-N-acetyl-alpha-D-glucosamine-binding residues include tyrosine 365 and asparagine 376. Acetyl-CoA contacts are provided by residues alanine 379, 385–386 (NY), serine 404, alanine 422, and arginine 439.

In the N-terminal section; belongs to the N-acetylglucosamine-1-phosphate uridyltransferase family. It in the C-terminal section; belongs to the transferase hexapeptide repeat family. As to quaternary structure, homotrimer. Requires Mg(2+) as cofactor. It depends on Ca(2+) as a cofactor.

The protein localises to the cytoplasm. The enzyme catalyses alpha-D-glucosamine 1-phosphate + acetyl-CoA = N-acetyl-alpha-D-glucosamine 1-phosphate + CoA + H(+). It carries out the reaction N-acetyl-alpha-D-glucosamine 1-phosphate + UTP + H(+) = UDP-N-acetyl-alpha-D-glucosamine + diphosphate. It participates in nucleotide-sugar biosynthesis; UDP-N-acetyl-alpha-D-glucosamine biosynthesis; N-acetyl-alpha-D-glucosamine 1-phosphate from alpha-D-glucosamine 6-phosphate (route II): step 2/2. It functions in the pathway nucleotide-sugar biosynthesis; UDP-N-acetyl-alpha-D-glucosamine biosynthesis; UDP-N-acetyl-alpha-D-glucosamine from N-acetyl-alpha-D-glucosamine 1-phosphate: step 1/1. The protein operates within bacterial outer membrane biogenesis; LPS lipid A biosynthesis. Catalyzes the last two sequential reactions in the de novo biosynthetic pathway for UDP-N-acetylglucosamine (UDP-GlcNAc). The C-terminal domain catalyzes the transfer of acetyl group from acetyl coenzyme A to glucosamine-1-phosphate (GlcN-1-P) to produce N-acetylglucosamine-1-phosphate (GlcNAc-1-P), which is converted into UDP-GlcNAc by the transfer of uridine 5-monophosphate (from uridine 5-triphosphate), a reaction catalyzed by the N-terminal domain. This Streptococcus pneumoniae serotype 4 (strain ATCC BAA-334 / TIGR4) protein is Bifunctional protein GlmU.